Consider the following 213-residue polypeptide: Heavy metal-binding protein HIP (213 aa).

The C1q domain maps to 80–213; sequence FKSHHVAFSA…MSTFTGFMLH (134 aa).

Pallium, gill and liver.

The protein resides in the secreted. Functionally, binds heavy metals. May function as a carrier of divalent cations in plasma. The sequence is that of Heavy metal-binding protein HIP from Mytilus edulis (Blue mussel).